The following is a 262-amino-acid chain: Succinate dehydrogenase [ubiquinone] iron-sulfur subunit (262 aa).

Residues 21–110 form the 2Fe-2S ferredoxin-type domain; sequence KLIKIFRWDS…NNIIYVYPLP (90 aa). The [2Fe-2S] cluster site is built by Cys-73, Cys-78, Cys-81, and Cys-93. The region spanning 154-184 is the 4Fe-4S ferredoxin-type domain; it reads DRLYLDGLYECILCACCSASCPSYWWNHDKY. The [4Fe-4S] cluster site is built by Cys-164, Cys-167, and Cys-170. A [3Fe-4S] cluster-binding site is contributed by Cys-174. An a ubiquinone-binding site is contributed by Trp-179. [3Fe-4S] cluster is bound by residues Cys-221 and Cys-227. Position 231 (Cys-231) interacts with [4Fe-4S] cluster.

The protein belongs to the succinate dehydrogenase/fumarate reductase iron-sulfur protein family. In terms of assembly, component of complex II composed of four subunits: a flavoprotein (FP), an iron-sulfur protein (IP), and a cytochrome b composed of a large and a small subunit. [2Fe-2S] cluster serves as cofactor. The cofactor is [3Fe-4S] cluster. [4Fe-4S] cluster is required as a cofactor.

It localises to the mitochondrion inner membrane. The enzyme catalyses a quinone + succinate = fumarate + a quinol. Its pathway is carbohydrate metabolism; tricarboxylic acid cycle; fumarate from succinate (eukaryal route): step 1/1. Iron-sulfur protein (IP) subunit of succinate dehydrogenase (SDH) that is involved in complex II of the mitochondrial electron transport chain and is responsible for transferring electrons from succinate to ubiquinone (coenzyme Q). The protein is Succinate dehydrogenase [ubiquinone] iron-sulfur subunit (SDH2) of Cyanidium caldarium (Red alga).